A 376-amino-acid polypeptide reads, in one-letter code: Cyclin-dependent kinase 9-B (376 aa).

Residues 19 to 319 form the Protein kinase domain; sequence YERLAKIGQG…SDEALNHDFF (301 aa). ATP contacts are provided by residues 25–33 and lysine 48; that span reads IGQGTFGEV. Aspartate 153 functions as the Proton acceptor in the catalytic mechanism. Positions 345–376 are disordered; the sequence is PPRRRGGHMPQQPANQARNPAATNQSEFDRVF. The span at 354–369 shows a compositional bias: low complexity; it reads PQQPANQARNPAATNQ.

Belongs to the protein kinase superfamily. CMGC Ser/Thr protein kinase family. CDC2/CDKX subfamily. As to quaternary structure, associates with cyclin-T to form P-TEFb.

The protein resides in the nucleus. The enzyme catalyses L-seryl-[protein] + ATP = O-phospho-L-seryl-[protein] + ADP + H(+). It catalyses the reaction L-threonyl-[protein] + ATP = O-phospho-L-threonyl-[protein] + ADP + H(+). The catalysed reaction is [DNA-directed RNA polymerase] + ATP = phospho-[DNA-directed RNA polymerase] + ADP + H(+). In terms of biological role, member of the cyclin-dependent kinase pair (CDK9/cyclin-T) complex, also called positive transcription elongation factor B (P-TEFb), which is proposed to facilitate the transition from abortive to production elongation by phosphorylating the CTD (C-terminal domain) of the large subunit of RNA polymerase II (RNAP II) and SUPT5H. In Xenopus laevis (African clawed frog), this protein is Cyclin-dependent kinase 9-B (cdk9-b).